An 897-amino-acid chain; its full sequence is Translation initiation factor IF-2 (897 aa).

Positions 52–310 (EHGSAPDKLT…LLQQGFQKPA (259 aa)) are disordered. Polar residues predominate over residues 68-82 (STLNVPGTGGKSKSV). Composition is skewed to basic and acidic residues over residues 85–159 (EVRK…KDKV) and 166–217 (EMTK…ENEK). Positions 256 to 272 (GRTRTASKTARPQKKGN) are enriched in basic residues. The segment covering 273-286 (KHAESKADREEARA) has biased composition (basic and acidic residues). A tr-type G domain is found at 396 to 565 (PRAPVVTIMG…LLQAEVLELK (170 aa)). Residues 405–412 (GHVDHGKT) are G1. GTP is bound at residue 405 to 412 (GHVDHGKT). The tract at residues 430-434 (GITQH) is G2. The G3 stretch occupies residues 451-454 (DTPG). GTP contacts are provided by residues 451 to 455 (DTPGH) and 505 to 508 (NKID). The interval 505 to 508 (NKID) is G4. The G5 stretch occupies residues 541–543 (SAK).

This sequence belongs to the TRAFAC class translation factor GTPase superfamily. Classic translation factor GTPase family. IF-2 subfamily.

It localises to the cytoplasm. In terms of biological role, one of the essential components for the initiation of protein synthesis. Protects formylmethionyl-tRNA from spontaneous hydrolysis and promotes its binding to the 30S ribosomal subunits. Also involved in the hydrolysis of GTP during the formation of the 70S ribosomal complex. The sequence is that of Translation initiation factor IF-2 (infB) from Enterobacter cloacae.